The primary structure comprises 772 residues: DnaJ homolog subfamily C member 16 (772 aa).

The signal sequence occupies residues Met-1–Ala-25. The Cytoplasmic segment spans residues Leu-26–Glu-533. One can recognise a J domain in the interval Asp-29–Gly-93. The Thioredoxin domain occupies Phe-119 to Pro-245. The helical; Anchor for type IV membrane protein transmembrane segment at Met-534–Val-554 threads the bilayer. Residues Gln-555–Asp-772 lie on the Extracellular side of the membrane. The disordered stretch occupies residues Ser-560–Ser-591. The segment covering Asn-561 to Lys-580 has biased composition (basic and acidic residues). Asn-629 carries an N-linked (GlcNAc...) asparagine glycan.

The protein resides in the endoplasmic reticulum membrane. Plays an important role in regulating the size of autophagosomes during the formation process. In Mus musculus (Mouse), this protein is DnaJ homolog subfamily C member 16 (Dnajc16).